The sequence spans 230 residues: Urease accessory protein UreF (230 aa).

It belongs to the UreF family. In terms of assembly, ureD, UreF and UreG form a complex that acts as a GTP-hydrolysis-dependent molecular chaperone, activating the urease apoprotein by helping to assemble the nickel containing metallocenter of UreC. The UreE protein probably delivers the nickel.

It localises to the cytoplasm. Its function is as follows. Required for maturation of urease via the functional incorporation of the urease nickel metallocenter. In Cupriavidus necator (strain ATCC 17699 / DSM 428 / KCTC 22496 / NCIMB 10442 / H16 / Stanier 337) (Ralstonia eutropha), this protein is Urease accessory protein UreF.